The chain runs to 160 residues: MAEKTYPMTLEEKEKLEKELEELKLVRRPEVVERIKIARSYGDLSENSEYEAAKDEQAFVEGQISSLETKIRYAEIVNSDAVAQDEVAIGKTVTIQEIGEDEEEVYIIVGSAGADAFAGKVSNESPIGQALIGKKTGDTATIETPVGSYDVKILKVEKTA.

Residues 1–72 (MAEKTYPMTL…QISSLETKIR (72 aa)) are a coiled coil.

The protein belongs to the GreA/GreB family.

Functionally, necessary for efficient RNA polymerase transcription elongation past template-encoded arresting sites. The arresting sites in DNA have the property of trapping a certain fraction of elongating RNA polymerases that pass through, resulting in locked ternary complexes. Cleavage of the nascent transcript by cleavage factors such as GreA or GreB allows the resumption of elongation from the new 3'terminus. GreA releases sequences of 2 to 3 nucleotides. The chain is Transcription elongation factor GreA from Streptococcus pneumoniae (strain ATCC 700669 / Spain 23F-1).